A 384-amino-acid chain; its full sequence is Ribonucleoside-diphosphate reductase small chain (384 aa).

Fe cation is bound by residues D130, E161, and H164. Y168 is a catalytic residue. Fe cation contacts are provided by E224, E258, and H261.

It belongs to the ribonucleoside diphosphate reductase small chain family. In terms of assembly, heterodimer of a large and a small subunit. Fe cation serves as cofactor.

The enzyme catalyses a 2'-deoxyribonucleoside 5'-diphosphate + [thioredoxin]-disulfide + H2O = a ribonucleoside 5'-diphosphate + [thioredoxin]-dithiol. In terms of biological role, provides the precursors necessary for DNA synthesis. Catalyzes the biosynthesis of deoxyribonucleotides from the corresponding ribonucleotides. The protein is Ribonucleoside-diphosphate reductase small chain of Spisula solidissima (Atlantic surf-clam).